Reading from the N-terminus, the 311-residue chain is Methionyl-tRNA formyltransferase (311 aa).

112–115 (SLLP) is a binding site for (6S)-5,6,7,8-tetrahydrofolate.

Belongs to the Fmt family.

It catalyses the reaction L-methionyl-tRNA(fMet) + (6R)-10-formyltetrahydrofolate = N-formyl-L-methionyl-tRNA(fMet) + (6S)-5,6,7,8-tetrahydrofolate + H(+). In terms of biological role, attaches a formyl group to the free amino group of methionyl-tRNA(fMet). The formyl group appears to play a dual role in the initiator identity of N-formylmethionyl-tRNA by promoting its recognition by IF2 and preventing the misappropriation of this tRNA by the elongation apparatus. In Rhizobium leguminosarum bv. trifolii (strain WSM2304), this protein is Methionyl-tRNA formyltransferase.